Reading from the N-terminus, the 293-residue chain is Glycine N-methyltransferase (293 aa).

An N-acetylvaline modification is found at valine 2. 2 residues coordinate (6S)-5-methyl-5,6,7,8-tetrahydrofolate: serine 4 and tyrosine 6. Serine 10 bears the Phosphoserine mark. S-adenosyl-L-methionine-binding residues include tyrosine 22, tryptophan 31, tyrosine 34, and arginine 41. A Phosphotyrosine modification is found at tyrosine 34. Lysine 46 bears the N6-succinyllysine mark. S-adenosyl-L-methionine is bound by residues alanine 65, 86 to 88 (DAS), 117 to 118 (NW), leucine 137, 137 to 140 (LGNS), and arginine 176. Residues lysine 191, lysine 196, and lysine 201 each carry the N6-succinyllysine modification. Histidine 215 contacts (6S)-5-methyl-5,6,7,8-tetrahydrofolate. Tyrosine 221 provides a ligand contact to S-adenosyl-L-methionine. Residue arginine 240 coordinates (6S)-5-methyl-5,6,7,8-tetrahydrofolate.

It belongs to the class I-like SAM-binding methyltransferase superfamily. Glycine N-methyltransferase family. As to quaternary structure, homotetramer.

It is found in the cytoplasm. It carries out the reaction glycine + S-adenosyl-L-methionine = sarcosine + S-adenosyl-L-homocysteine + H(+). Inhibited by 5-methyltetrahydrofolate monoglutamate and by 5-methyltetrahydrofolate pentaglutamate, inhibition is much more effective by the pentaglutamate form than by the monoglutamate form. Two molecules of 5-methyltetrahydrofolate are bound per tetramer. The binding sites are localized between subunits. Inhibitor binding may preclude movements of the polypeptide chain that are necessary for enzyme activity. Catalyzes the methylation of glycine by using S-adenosylmethionine (AdoMet) to form N-methylglycine (sarcosine) with the concomitant production of S-adenosylhomocysteine (AdoHcy), a reaction regulated by the binding of 5-methyltetrahydrofolate. Plays an important role in the regulation of methyl group metabolism by regulating the ratio between S-adenosyl-L-methionine and S-adenosyl-L-homocysteine. The sequence is that of Glycine N-methyltransferase (Gnmt) from Mus musculus (Mouse).